We begin with the raw amino-acid sequence, 290 residues long: CTP-dependent diacylglycerol kinase 1 (290 aa).

Residues Met-1–Ala-33 are disordered. Topologically, residues Met-1 to Lys-77 are lumenal. A glycan (N-linked (GlcNAc...) asparagine) is linked at Asn-11. A compositionally biased stretch (polar residues) spans Arg-23 to Ala-33. A phosphoserine mark is found at Ser-44, Ser-45, and Ser-46. Residues Val-78 to Ile-95 form a helical membrane-spanning segment. At Asn-96–Pro-103 the chain is on the cytoplasmic side. Residues Leu-104–Phe-124 traverse the membrane as a helical segment. Residues Asn-125–Glu-140 are Lumenal-facing. The chain crosses the membrane as a helical span at residues Ile-141 to Phe-161. Residues Ser-162–Lys-163 lie on the Cytoplasmic side of the membrane. The chain crosses the membrane as a helical span at residues Asp-164–Gly-184. The Lumenal portion of the chain corresponds to Arg-185–Ser-203. N-linked (GlcNAc...) asparagine glycosylation is present at Asn-197. The helical transmembrane segment at Ile-204 to Ala-224 threads the bilayer. Topologically, residues Tyr-225–Ser-244 are cytoplasmic. Residues Leu-245–Phe-265 form a helical membrane-spanning segment. Residues Asn-266–Lys-290 are Lumenal-facing. The N-linked (GlcNAc...) asparagine glycan is linked to Asn-270.

The protein belongs to the DGK1 family. It depends on Ca(2+) as a cofactor. The cofactor is Mg(2+). CKII-mediated phosphorylation of Ser-45 and Ser-46 regulates its function in the production of PA.

It is found in the endoplasmic reticulum membrane. Its subcellular location is the nucleus membrane. The catalysed reaction is a 1,2-diacyl-sn-glycerol + CTP = a 1,2-diacyl-sn-glycero-3-phosphate + CDP + H(+). It carries out the reaction 1,2-di-(9Z-octadecenoyl)-sn-glycerol + CTP = 1,2-di-(9Z-octadecenoyl)-sn-glycero-3-phosphate + CDP + H(+). With respect to regulation, inhibited by N-ethylmaleimide, dCTP, and sphingoid bases including sphinganine, sphingosine and phytosphingosine. DAG pyrophosphate, cardiolipin, CDP-DAG, and lyso-PA inhibited activity by 23-66%. Also inhibited by Ca(2+) concentrations of more than 1 mM, by addition of EDTA or EGTA at 5 mM, and by 5 mM Mn(2+) and Zn(2+). Stimulated by major membrane phospholipids including phosphatidylcholine, phosphatidylethanolamine, phosphatidylinositol, phosphatidylserine, phosphatidylglycerol, and phosphatidate. Also stimulated to a maximum by addition of TritonX-100 at a concentration of 1 mM, followed by an apparent inhibition of activity at concentrations above 1 mM. CTP-dependent diacylglycerol kinase that catalyzes the phosphorylation of diacylglycerol (DAG) to phosphatidate (PA). Controls phosphatidate levels at the nuclear envelope. Counteracts the activity of PA phosphatase PAH1/SMP2, controlling the levels of PA and DAG for the synthesis of triacylglycerol and membrane phospholipids. May be involved in vesicle trafficking between the endoplasmic reticulum and the Golgi apparatus. Required to convert triacylglycerol-derived DAG to PA for phospholipid synthesis during growth resumption from stationary phase in the absence of de novo fatty acid synthesis. Involved in the resistance to nickel chloride and nalidixic acid. This is CTP-dependent diacylglycerol kinase 1 (DGK1) from Saccharomyces cerevisiae (strain ATCC 204508 / S288c) (Baker's yeast).